The chain runs to 538 residues: Succinyl-CoA:acetate CoA-transferase (538 aa).

305-309 (GVGSV) contacts CoA. The 5-glutamyl coenzyme A thioester intermediate role is filled by E330. The CoA site is built by N420 and G424.

This sequence belongs to the acetyl-CoA hydrolase/transferase family.

The catalysed reaction is succinyl-CoA + acetate = succinate + acetyl-CoA. In terms of biological role, forms succinyl-CoA from succinate and acetyl-CoA. This is Succinyl-CoA:acetate CoA-transferase from Clostridium kluyveri (strain ATCC 8527 / DSM 555 / NBRC 12016 / NCIMB 10680 / K1).